Here is a 353-residue protein sequence, read N- to C-terminus: Forkhead box protein I3-A (353 aa).

A DNA-binding region (fork-head) is located at residues 116-210 (RPPYSYSALI…DNGNFRRKRK (95 aa)). Positions 201–255 (DNGNFRRKRKRKSDSLAEEEGKGYSGSDSALSSPKNPSDSSERGNSPISTDQAPC) are disordered. The short motif at 206 to 212 (RRKRKRK) is the Nuclear localization signal element. Residues 213-222 (SDSLAEEEGK) are compositionally biased toward basic and acidic residues. Residues 226-252 (GSDSALSSPKNPSDSSERGNSPISTDQ) are compositionally biased toward polar residues.

In terms of tissue distribution, expressed in ionocyte precursors.

Its subcellular location is the nucleus. Its function is as follows. Transcription factor required for epithelial cell differentiation. Involved in specification of skin ionocytes from epidermal precursors. The polypeptide is Forkhead box protein I3-A (Danio rerio (Zebrafish)).